The primary structure comprises 159 residues: Ribosomal RNA large subunit methyltransferase H (159 aa).

S-adenosyl-L-methionine contacts are provided by residues Leu76, Gly108, and 127–132 (FSKMTF).

Belongs to the RNA methyltransferase RlmH family. Homodimer.

The protein localises to the cytoplasm. The catalysed reaction is pseudouridine(1915) in 23S rRNA + S-adenosyl-L-methionine = N(3)-methylpseudouridine(1915) in 23S rRNA + S-adenosyl-L-homocysteine + H(+). Its function is as follows. Specifically methylates the pseudouridine at position 1915 (m3Psi1915) in 23S rRNA. The sequence is that of Ribosomal RNA large subunit methyltransferase H from Clostridium botulinum (strain ATCC 19397 / Type A).